Reading from the N-terminus, the 200-residue chain is Protein GrpE (200 aa).

Belongs to the GrpE family. As to quaternary structure, homodimer.

It is found in the cytoplasm. In terms of biological role, participates actively in the response to hyperosmotic and heat shock by preventing the aggregation of stress-denatured proteins, in association with DnaK and GrpE. It is the nucleotide exchange factor for DnaK and may function as a thermosensor. Unfolded proteins bind initially to DnaJ; upon interaction with the DnaJ-bound protein, DnaK hydrolyzes its bound ATP, resulting in the formation of a stable complex. GrpE releases ADP from DnaK; ATP binding to DnaK triggers the release of the substrate protein, thus completing the reaction cycle. Several rounds of ATP-dependent interactions between DnaJ, DnaK and GrpE are required for fully efficient folding. This Geobacter sulfurreducens (strain ATCC 51573 / DSM 12127 / PCA) protein is Protein GrpE.